A 162-amino-acid chain; its full sequence is uncharacterized protein (162 aa).

A helical transmembrane segment spans residues 6 to 24 (SYLISIFYIILITSETTAF).

The protein localises to the membrane. This is an uncharacterized protein from Caenorhabditis elegans.